The following is a 514-amino-acid chain: MHYSPLTVLALLGGTLLLYCSGLVIYRLVFDPLSKFPGPKLSAATFWYEFYYDVIKKGQFTFKIGEWHKQYGPIIRINPYEIHIDDPEGDFYHTVFSGTGVRDKHFWYASQFGTPESGLGTINHHLHRHRRRALNPSFSKASIVRLTPVIWSKIEKLCSRFDELRGTDQPVNVRLAYTCLTTDVITSYAFNRCWNHLDKPDFSPVWCKTLVNGSKMTRWTKQFPWMLETMKKMPQALVGFFDPGMLLVFDVMNKIHHQILDILNGKQEVEDSATDGLSKSPIPNRTIFHELLKSDLPDYDKTIHHLGQEGQNIIGAGADTTSNALTVITYHLLSNPRVLGKLKEELERAMPDRYGAWDLKVAEGLPYLGGVIQEGLRLAYGASSRLTRVAPEEDLNFDGWFIQKGTPISMTALYMHHNEKIFPNSHTFLPERWTDAPDGGRSLDRYLVSFSKGSRQCIGINLAKVELFLTLATVFRRFEMDLHDTVFERDVQLKHDFFLPQPSMQSNGVRVIFK.

The chain crosses the membrane as a helical span at residues 6–26 (LTVLALLGGTLLLYCSGLVIY). C457 provides a ligand contact to heme.

This sequence belongs to the cytochrome P450 family. Heme serves as cofactor.

The protein resides in the membrane. The catalysed reaction is polyporic acid + reduced [NADPH--hemoprotein reductase] + O2 = ascocorynin + oxidized [NADPH--hemoprotein reductase] + H2O + H(+). It functions in the pathway secondary metabolite biosynthesis. Functionally, cytochrome P450 monooxygenase that hydroxylates polyporic acid produced by the nonribosomal peptide synthetase acyN to produce the less toxic metabolite ascocorynin. The hydrophobic substrate polyporic acid might approach the active site from the membrane and, after hydroxylation into ascocorynin, leaves into the cytoplasm. MO6277 appears vital to avoid high-level accumulation of polyporic acid in the fungal membrane. The polypeptide is Cytochrome P450 monooxygenase MO6277 (Ascocoryne sarcoides (Purple jellydisc fungus)).